We begin with the raw amino-acid sequence, 689 residues long: Glycine--tRNA ligase beta subunit (689 aa).

This sequence belongs to the class-II aminoacyl-tRNA synthetase family. As to quaternary structure, tetramer of two alpha and two beta subunits.

Its subcellular location is the cytoplasm. The enzyme catalyses tRNA(Gly) + glycine + ATP = glycyl-tRNA(Gly) + AMP + diphosphate. This chain is Glycine--tRNA ligase beta subunit, found in Shewanella pealeana (strain ATCC 700345 / ANG-SQ1).